The following is a 409-amino-acid chain: Mitochondrial inner membrane protein oxa1-2 (409 aa).

The chain crosses the membrane as a helical span at residues 76 to 96 (VVYTPSLPLSSSVLASFSFLP). Over 97–114 (HNILQNGLNTLHIWSGLP) the chain is Mitochondrial intermembrane. The helical transmembrane segment at 115–135 (WWASIAACAVAMRIAVFPIML) threads the bilayer. The Mitochondrial matrix portion of the chain corresponds to 136 to 188 (KMMKTSAKLAIINPKVAEHMSVLSKAKAEGNSELMMQATTQIQNLYKVNNVNP). The chain crosses the membrane as a helical span at residues 189–209 (LNLLSAPVFQGILFISFFYAL). Over 210–235 (KTMAGVPVEGFTDGGFWWVNDLSQPD) the chain is Mitochondrial intermembrane. The helical transmembrane segment at 236-256 (PLHIFPVANGLLMLLNIELGS) threads the bilayer. At 257–275 (ETGSNKVAMSPSMKKFFRF) the chain is on the mitochondrial matrix side. The helical transmembrane segment at 276–296 (LCLASPLFTMNFPMAIFMYWF) threads the bilayer. Residues 297 to 409 (PSNVFSVFQG…SVTKPTEKKD (113 aa)) lie on the Mitochondrial intermembrane side of the membrane. Residues 369–409 (TDTNNEQKPTNNSTITKATTLSDNSQNDKSSSVTKPTEKKD) are disordered. Polar residues predominate over residues 374-403 (EQKPTNNSTITKATTLSDNSQNDKSSSVTK).

This sequence belongs to the OXA1/ALB3/YidC family.

It localises to the mitochondrion inner membrane. Its function is as follows. Required for the insertion of integral membrane proteins into the mitochondrial inner membrane. Essential for the activity and assembly of cytochrome c oxidase. It is essential for viability while oxa101 is not. When both are deleted the cell is non-viable, suggesting that oxa101 act as a back-up for oxa102. In Schizosaccharomyces pombe (strain 972 / ATCC 24843) (Fission yeast), this protein is Mitochondrial inner membrane protein oxa1-2 (oxa102).